A 310-amino-acid chain; its full sequence is Tagatose-6-phosphate kinase (310 aa).

Belongs to the carbohydrate kinase PfkB family. LacC subfamily.

The catalysed reaction is D-tagatofuranose 6-phosphate + ATP = D-tagatofuranose 1,6-bisphosphate + ADP + H(+). The protein operates within carbohydrate metabolism; D-tagatose 6-phosphate degradation; D-glyceraldehyde 3-phosphate and glycerone phosphate from D-tagatose 6-phosphate: step 1/2. The protein is Tagatose-6-phosphate kinase of Staphylococcus aureus (strain USA300 / TCH1516).